The following is a 212-amino-acid chain: Probable chemoreceptor glutamine deamidase CheD (212 aa).

This sequence belongs to the CheD family.

It catalyses the reaction L-glutaminyl-[protein] + H2O = L-glutamyl-[protein] + NH4(+). Its function is as follows. Probably deamidates glutamine residues to glutamate on methyl-accepting chemotaxis receptors (MCPs), playing an important role in chemotaxis. The sequence is that of Probable chemoreceptor glutamine deamidase CheD from Bordetella parapertussis (strain 12822 / ATCC BAA-587 / NCTC 13253).